The primary structure comprises 264 residues: Thymidylate synthase (264 aa).

Position 21 (Arg-21) interacts with dUMP. (6R)-5,10-methylene-5,6,7,8-tetrahydrofolate is bound at residue His-51. Residue 126–127 (RR) participates in dUMP binding. The active-site Nucleophile is the Cys-146. DUMP contacts are provided by residues 166–169 (RSAD), Asn-177, and 207–209 (HLY). Residue Asp-169 participates in (6R)-5,10-methylene-5,6,7,8-tetrahydrofolate binding. Ala-263 provides a ligand contact to (6R)-5,10-methylene-5,6,7,8-tetrahydrofolate.

This sequence belongs to the thymidylate synthase family. Bacterial-type ThyA subfamily. Homodimer.

It is found in the cytoplasm. The enzyme catalyses dUMP + (6R)-5,10-methylene-5,6,7,8-tetrahydrofolate = 7,8-dihydrofolate + dTMP. It participates in pyrimidine metabolism; dTTP biosynthesis. Catalyzes the reductive methylation of 2'-deoxyuridine-5'-monophosphate (dUMP) to 2'-deoxythymidine-5'-monophosphate (dTMP) while utilizing 5,10-methylenetetrahydrofolate (mTHF) as the methyl donor and reductant in the reaction, yielding dihydrofolate (DHF) as a by-product. This enzymatic reaction provides an intracellular de novo source of dTMP, an essential precursor for DNA biosynthesis. The chain is Thymidylate synthase from Methylorubrum extorquens (strain CM4 / NCIMB 13688) (Methylobacterium extorquens).